The primary structure comprises 540 residues: Probable ATP-dependent RNA helicase DDX28 (540 aa).

Positions 3-18 match the Mitochondrial targeting signal motif; the sequence is LTRPVRLFSLVTRLLL. The Q motif motif lies at 126-156; sequence GSFADLGLEPRVLHALQEAAPEVVQPTTVQS. The 193-residue stretch at 159–351 folds into the Helicase ATP-binding domain; sequence IPSLLRGRHV…NKVASPDAVT (193 aa). Residue 172 to 179 coordinates ATP; the sequence is AETGSGKT. The short motif at 180–191 is the Nuclear export signal element; that stretch reads LSYLLPLLQRLL. The short motif at 286–289 is the DEAD element; sequence DEAD. The region spanning 377–536 is the Helicase C-terminal domain; it reads KVAELVHILK…GLASSVKEPL (160 aa). The Nuclear localization signal signature appears at 520–523; sequence RRRR.

This sequence belongs to the DEAD box helicase family. Monomer. Found in a complex with GRSF1, DHX30, FASTKD2 and FASTKD5. Associates with the 16S mitochondrial rRNA (16S mt-rRNA) and with the mitochondrial ribosome large subunit (39S). Expressed in all tissues tested, including brain, placenta, lung, liver, skeletal muscle, kidney, pancreas, leukocytes, colon, small intestine, ovary and prostate.

The protein resides in the nucleus. It localises to the mitochondrion. It is found in the mitochondrion matrix. The protein localises to the mitochondrion nucleoid. It catalyses the reaction ATP + H2O = ADP + phosphate + H(+). In terms of biological role, plays an essential role in facilitating the proper assembly of the mitochondrial large ribosomal subunit and its helicase activity is essential for this function. May be involved in RNA processing or transport. Has RNA and Mg(2+)-dependent ATPase activity. The protein is Probable ATP-dependent RNA helicase DDX28 (DDX28) of Homo sapiens (Human).